We begin with the raw amino-acid sequence, 306 residues long: Ribonuclease Z (306 aa).

Zn(2+) contacts are provided by H63, H65, D67, H68, H141, D211, and H269. D67 acts as the Proton acceptor in catalysis.

It belongs to the RNase Z family. In terms of assembly, homodimer. The cofactor is Zn(2+).

It carries out the reaction Endonucleolytic cleavage of RNA, removing extra 3' nucleotides from tRNA precursor, generating 3' termini of tRNAs. A 3'-hydroxy group is left at the tRNA terminus and a 5'-phosphoryl group is left at the trailer molecule.. In terms of biological role, zinc phosphodiesterase, which displays some tRNA 3'-processing endonuclease activity. Probably involved in tRNA maturation, by removing a 3'-trailer from precursor tRNA. The chain is Ribonuclease Z from Staphylococcus aureus (strain USA300).